Here is a 174-residue protein sequence, read N- to C-terminus: Crossover junction endodeoxyribonuclease RuvC (174 aa).

Residues aspartate 8, glutamate 69, and aspartate 141 contribute to the active site. 3 residues coordinate Mg(2+): aspartate 8, glutamate 69, and aspartate 141.

This sequence belongs to the RuvC family. In terms of assembly, homodimer which binds Holliday junction (HJ) DNA. The HJ becomes 2-fold symmetrical on binding to RuvC with unstacked arms; it has a different conformation from HJ DNA in complex with RuvA. In the full resolvosome a probable DNA-RuvA(4)-RuvB(12)-RuvC(2) complex forms which resolves the HJ. The cofactor is Mg(2+).

Its subcellular location is the cytoplasm. The catalysed reaction is Endonucleolytic cleavage at a junction such as a reciprocal single-stranded crossover between two homologous DNA duplexes (Holliday junction).. Its function is as follows. The RuvA-RuvB-RuvC complex processes Holliday junction (HJ) DNA during genetic recombination and DNA repair. Endonuclease that resolves HJ intermediates. Cleaves cruciform DNA by making single-stranded nicks across the HJ at symmetrical positions within the homologous arms, yielding a 5'-phosphate and a 3'-hydroxyl group; requires a central core of homology in the junction. The consensus cleavage sequence is 5'-(A/T)TT(C/G)-3'. Cleavage occurs on the 3'-side of the TT dinucleotide at the point of strand exchange. HJ branch migration catalyzed by RuvA-RuvB allows RuvC to scan DNA until it finds its consensus sequence, where it cleaves and resolves the cruciform DNA. In Xanthomonas oryzae pv. oryzae (strain MAFF 311018), this protein is Crossover junction endodeoxyribonuclease RuvC.